Consider the following 1360-residue polypeptide: DNA-directed RNA polymerase subunit beta (1360 aa).

This sequence belongs to the RNA polymerase beta chain family. As to quaternary structure, the RNAP catalytic core consists of 2 alpha, 1 beta, 1 beta' and 1 omega subunit. When a sigma factor is associated with the core the holoenzyme is formed, which can initiate transcription.

The catalysed reaction is RNA(n) + a ribonucleoside 5'-triphosphate = RNA(n+1) + diphosphate. Its function is as follows. DNA-dependent RNA polymerase catalyzes the transcription of DNA into RNA using the four ribonucleoside triphosphates as substrates. In Teredinibacter turnerae (strain ATCC 39867 / T7901), this protein is DNA-directed RNA polymerase subunit beta.